The following is a 204-amino-acid chain: Glycerol-3-phosphate acyltransferase (204 aa).

5 helical membrane-spanning segments follow: residues 8–28, 53–73, 81–101, 116–136, and 155–175; these read ILIF…CYIF, VPAA…VVIA, FITA…IFFG, FGFS…VAII, and VIFT…IIIL.

It belongs to the PlsY family. As to quaternary structure, probably interacts with PlsX.

The protein localises to the cell inner membrane. The catalysed reaction is an acyl phosphate + sn-glycerol 3-phosphate = a 1-acyl-sn-glycero-3-phosphate + phosphate. The protein operates within lipid metabolism; phospholipid metabolism. Catalyzes the transfer of an acyl group from acyl-phosphate (acyl-PO(4)) to glycerol-3-phosphate (G3P) to form lysophosphatidic acid (LPA). This enzyme utilizes acyl-phosphate as fatty acyl donor, but not acyl-CoA or acyl-ACP. This is Glycerol-3-phosphate acyltransferase from Francisella tularensis subsp. novicida (strain U112).